The sequence spans 100 residues: Integration host factor subunit alpha (100 aa).

The segment at Phe53–Ile72 is disordered.

The protein belongs to the bacterial histone-like protein family. In terms of assembly, heterodimer of an alpha and a beta chain.

This protein is one of the two subunits of integration host factor, a specific DNA-binding protein that functions in genetic recombination as well as in transcriptional and translational control. This chain is Integration host factor subunit alpha, found in Stutzerimonas stutzeri (strain A1501) (Pseudomonas stutzeri).